The primary structure comprises 425 residues: Gamma-glutamyl phosphate reductase (425 aa).

This sequence belongs to the gamma-glutamyl phosphate reductase family.

Its subcellular location is the cytoplasm. The enzyme catalyses L-glutamate 5-semialdehyde + phosphate + NADP(+) = L-glutamyl 5-phosphate + NADPH + H(+). It participates in amino-acid biosynthesis; L-proline biosynthesis; L-glutamate 5-semialdehyde from L-glutamate: step 2/2. In terms of biological role, catalyzes the NADPH-dependent reduction of L-glutamate 5-phosphate into L-glutamate 5-semialdehyde and phosphate. The product spontaneously undergoes cyclization to form 1-pyrroline-5-carboxylate. This chain is Gamma-glutamyl phosphate reductase, found in Novosphingobium aromaticivorans (strain ATCC 700278 / DSM 12444 / CCUG 56034 / CIP 105152 / NBRC 16084 / F199).